Reading from the N-terminus, the 220-residue chain is Thiamine-phosphate synthase (220 aa).

Residues Gln39–Lys43 and Asn80 contribute to the 4-amino-2-methyl-5-(diphosphooxymethyl)pyrimidine site. The Mg(2+) site is built by Asp81 and Asp100. Ser119 contributes to the 4-amino-2-methyl-5-(diphosphooxymethyl)pyrimidine binding site. Thr145–Thr147 contacts 2-[(2R,5Z)-2-carboxy-4-methylthiazol-5(2H)-ylidene]ethyl phosphate. Lys148 contacts 4-amino-2-methyl-5-(diphosphooxymethyl)pyrimidine. Gly176 contributes to the 2-[(2R,5Z)-2-carboxy-4-methylthiazol-5(2H)-ylidene]ethyl phosphate binding site.

It belongs to the thiamine-phosphate synthase family. Mg(2+) is required as a cofactor.

The enzyme catalyses 2-[(2R,5Z)-2-carboxy-4-methylthiazol-5(2H)-ylidene]ethyl phosphate + 4-amino-2-methyl-5-(diphosphooxymethyl)pyrimidine + 2 H(+) = thiamine phosphate + CO2 + diphosphate. The catalysed reaction is 2-(2-carboxy-4-methylthiazol-5-yl)ethyl phosphate + 4-amino-2-methyl-5-(diphosphooxymethyl)pyrimidine + 2 H(+) = thiamine phosphate + CO2 + diphosphate. It catalyses the reaction 4-methyl-5-(2-phosphooxyethyl)-thiazole + 4-amino-2-methyl-5-(diphosphooxymethyl)pyrimidine + H(+) = thiamine phosphate + diphosphate. Its pathway is cofactor biosynthesis; thiamine diphosphate biosynthesis; thiamine phosphate from 4-amino-2-methyl-5-diphosphomethylpyrimidine and 4-methyl-5-(2-phosphoethyl)-thiazole: step 1/1. Condenses 4-methyl-5-(beta-hydroxyethyl)thiazole monophosphate (THZ-P) and 2-methyl-4-amino-5-hydroxymethyl pyrimidine pyrophosphate (HMP-PP) to form thiamine monophosphate (TMP). The chain is Thiamine-phosphate synthase from Mycobacterium ulcerans (strain Agy99).